A 314-amino-acid chain; its full sequence is tRNA dimethylallyltransferase (314 aa).

Residue 9 to 16 (GPTAVGKT) coordinates ATP. 11–16 (TAVGKT) is a binding site for substrate. Positions 34–37 (DSVQ) are interaction with substrate tRNA.

The protein belongs to the IPP transferase family. As to quaternary structure, monomer. It depends on Mg(2+) as a cofactor.

The enzyme catalyses adenosine(37) in tRNA + dimethylallyl diphosphate = N(6)-dimethylallyladenosine(37) in tRNA + diphosphate. In terms of biological role, catalyzes the transfer of a dimethylallyl group onto the adenine at position 37 in tRNAs that read codons beginning with uridine, leading to the formation of N6-(dimethylallyl)adenosine (i(6)A). The polypeptide is tRNA dimethylallyltransferase (Desulfitobacterium hafniense (strain DSM 10664 / DCB-2)).